The following is a 117-amino-acid chain: Prefoldin subunit beta (117 aa).

It belongs to the prefoldin subunit beta family. Heterohexamer of two alpha and four beta subunits.

Its subcellular location is the cytoplasm. In terms of biological role, molecular chaperone capable of stabilizing a range of proteins. Seems to fulfill an ATP-independent, HSP70-like function in archaeal de novo protein folding. The protein is Prefoldin subunit beta of Methanococcoides burtonii (strain DSM 6242 / NBRC 107633 / OCM 468 / ACE-M).